The chain runs to 433 residues: Enolase (433 aa).

Ser-1 carries the post-translational modification N-acetylserine. Residues Ser-36 and His-157 each coordinate (2R)-2-phosphoglycerate. The Proton donor role is filled by Glu-209. Positions 244, 294, and 319 each coordinate Mn(2+). Residues Lys-344, Arg-373, and Ser-374 each contribute to the (2R)-2-phosphoglycerate site. The active-site Proton acceptor is Lys-344.

It belongs to the enolase family. As to quaternary structure, homodimer. Mg(2+) is required as a cofactor.

Its subcellular location is the cytoplasm. The catalysed reaction is (2R)-2-phosphoglycerate = phosphoenolpyruvate + H2O. Its pathway is carbohydrate degradation; glycolysis; pyruvate from D-glyceraldehyde 3-phosphate: step 4/5. With respect to regulation, inhibited by 2-phosphoglycolic acid. In Homarus gammarus (European lobster), this protein is Enolase.